Here is a 347-residue protein sequence, read N- to C-terminus: Heat-inducible transcription repressor HrcA (347 aa).

It belongs to the HrcA family.

Negative regulator of class I heat shock genes (grpE-dnaK-dnaJ and groELS operons). Prevents heat-shock induction of these operons. The protein is Heat-inducible transcription repressor HrcA of Lactococcus lactis subsp. lactis (strain IL1403) (Streptococcus lactis).